The primary structure comprises 753 residues: 5-methyltetrahydropteroyltriglutamate--homocysteine methyltransferase (753 aa).

5-methyltetrahydropteroyltri-L-glutamate-binding positions include Arg17–Lys20 and Lys117. L-homocysteine is bound by residues Ile431–Ser433 and Glu484. L-methionine contacts are provided by residues Ile431–Ser433 and Glu484. 5-methyltetrahydropteroyltri-L-glutamate contacts are provided by residues Arg515–Cys516 and Trp561. An L-homocysteine-binding site is contributed by Asp599. Asp599 is an L-methionine binding site. Glu605 provides a ligand contact to 5-methyltetrahydropteroyltri-L-glutamate. Positions 641, 643, and 665 each coordinate Zn(2+). His694 (proton donor) is an active-site residue. Cys726 lines the Zn(2+) pocket.

The protein belongs to the vitamin-B12 independent methionine synthase family. The cofactor is Zn(2+).

It carries out the reaction 5-methyltetrahydropteroyltri-L-glutamate + L-homocysteine = tetrahydropteroyltri-L-glutamate + L-methionine. Its pathway is amino-acid biosynthesis; L-methionine biosynthesis via de novo pathway; L-methionine from L-homocysteine (MetE route): step 1/1. Its function is as follows. Catalyzes the transfer of a methyl group from 5-methyltetrahydrofolate to homocysteine resulting in methionine formation. The chain is 5-methyltetrahydropteroyltriglutamate--homocysteine methyltransferase from Escherichia coli O6:H1 (strain CFT073 / ATCC 700928 / UPEC).